The primary structure comprises 190 residues: dTTP/UTP pyrophosphatase (190 aa).

The Proton acceptor role is filled by Asp71.

It belongs to the Maf family. YhdE subfamily. A divalent metal cation is required as a cofactor.

It is found in the cytoplasm. It catalyses the reaction dTTP + H2O = dTMP + diphosphate + H(+). It carries out the reaction UTP + H2O = UMP + diphosphate + H(+). Nucleoside triphosphate pyrophosphatase that hydrolyzes dTTP and UTP. May have a dual role in cell division arrest and in preventing the incorporation of modified nucleotides into cellular nucleic acids. The protein is dTTP/UTP pyrophosphatase of Xanthomonas axonopodis pv. citri (strain 306).